Consider the following 65-residue polypeptide: Large ribosomal subunit protein bL35 (65 aa).

It belongs to the bacterial ribosomal protein bL35 family.

The protein is Large ribosomal subunit protein bL35 of Yersinia enterocolitica serotype O:8 / biotype 1B (strain NCTC 13174 / 8081).